Here is a 503-residue protein sequence, read N- to C-terminus: ATP synthase subunit alpha (503 aa).

ATP is bound at residue glycine 169–threonine 176.

This sequence belongs to the ATPase alpha/beta chains family. As to quaternary structure, F-type ATPases have 2 components, CF(1) - the catalytic core - and CF(0) - the membrane proton channel. CF(1) has five subunits: alpha(3), beta(3), gamma(1), delta(1), epsilon(1). CF(0) has three main subunits: a(1), b(2) and c(9-12). The alpha and beta chains form an alternating ring which encloses part of the gamma chain. CF(1) is attached to CF(0) by a central stalk formed by the gamma and epsilon chains, while a peripheral stalk is formed by the delta and b chains.

Its subcellular location is the cell membrane. The enzyme catalyses ATP + H2O + 4 H(+)(in) = ADP + phosphate + 5 H(+)(out). In terms of biological role, produces ATP from ADP in the presence of a proton gradient across the membrane. The alpha chain is a regulatory subunit. The chain is ATP synthase subunit alpha from Lactobacillus delbrueckii subsp. bulgaricus (strain ATCC 11842 / DSM 20081 / BCRC 10696 / JCM 1002 / NBRC 13953 / NCIMB 11778 / NCTC 12712 / WDCM 00102 / Lb 14).